The sequence spans 1056 residues: Sucrose-phosphate synthase (1056 aa).

Basic and acidic residues predominate over residues 112–123; it reads HVERERGRREAT. A disordered region spans residues 112–132; the sequence is HVERERGRREATADMSEDLSE. Phosphoserine occurs at positions 158 and 424. A disordered region spans residues 681–700; the sequence is NWQRIDEGSENSDTDSAGDS.

It belongs to the glycosyltransferase 1 family. Homodimer or homotetramer. Phosphorylated at Ser-158 and Ser-424.

The enzyme catalyses beta-D-fructose 6-phosphate + UDP-alpha-D-glucose = sucrose 6(F)-phosphate + UDP + H(+). Its pathway is glycan biosynthesis; sucrose biosynthesis; sucrose from D-fructose 6-phosphate and UDP-alpha-D-glucose: step 1/2. With respect to regulation, activity is regulated by phosphorylation and moderated by concentration of metabolites and light. Plays a role in photosynthetic sucrose synthesis by catalyzing the rate-limiting step of sucrose biosynthesis from UDP-glucose and fructose- 6-phosphate. Involved in the regulation of carbon partitioning in the leaves of plants. May regulate the synthesis of sucrose and therefore play a major role as a limiting factor in the export of photoassimilates out of the leaf. Plays a role for sucrose availability that is essential for plant growth and fiber elongation. The chain is Sucrose-phosphate synthase (SPS1) from Spinacia oleracea (Spinach).